We begin with the raw amino-acid sequence, 156 residues long: Methylated-DNA--protein-cysteine methyltransferase (156 aa).

C126 serves as the catalytic Nucleophile; methyl group acceptor.

This sequence belongs to the MGMT family.

The protein resides in the cytoplasm. The enzyme catalyses a 6-O-methyl-2'-deoxyguanosine in DNA + L-cysteinyl-[protein] = S-methyl-L-cysteinyl-[protein] + a 2'-deoxyguanosine in DNA. It catalyses the reaction a 4-O-methyl-thymidine in DNA + L-cysteinyl-[protein] = a thymidine in DNA + S-methyl-L-cysteinyl-[protein]. Involved in the cellular defense against the biological effects of O6-methylguanine (O6-MeG) and O4-methylthymine (O4-MeT) in DNA. Repairs the methylated nucleobase in DNA by stoichiometrically transferring the methyl group to a cysteine residue in the enzyme. This is a suicide reaction: the enzyme is irreversibly inactivated. This Methanosarcina acetivorans (strain ATCC 35395 / DSM 2834 / JCM 12185 / C2A) protein is Methylated-DNA--protein-cysteine methyltransferase.